The chain runs to 191 residues: Dirigent protein 3 (191 aa).

Residues 1–21 form the signal peptide; sequence MSKLILILTAQILLLTATALA. Asn-96 and Asn-131 each carry an N-linked (GlcNAc...) asparagine glycan.

It belongs to the plant dirigent protein family. In terms of assembly, homodimer.

It is found in the secreted. Its subcellular location is the extracellular space. The protein resides in the apoplast. Functionally, dirigent proteins impart stereoselectivity on the phenoxy radical-coupling reaction, yielding optically active lignans from two molecules of coniferyl alcohol in the biosynthesis of lignans, flavonolignans, and alkaloids and thus plays a central role in plant secondary metabolism. In Arabidopsis thaliana (Mouse-ear cress), this protein is Dirigent protein 3 (DIR3).